Here is a 46-residue protein sequence, read N- to C-terminus: L-amino-acid oxidase (46 aa).

N31 carries an N-linked (GlcNAc...) asparagine glycan.

This sequence belongs to the flavin monoamine oxidase family. FIG1 subfamily. FAD is required as a cofactor.

It localises to the secreted. The protein localises to the lysosome. The protein resides in the cytoplasmic vesicle. It is found in the secretory vesicle. Its subcellular location is the acrosome. It catalyses the reaction an L-alpha-amino acid + O2 + H2O = a 2-oxocarboxylate + H2O2 + NH4(+). The enzyme catalyses L-tryptophan + O2 + H2O = indole-3-pyruvate + H2O2 + NH4(+). The catalysed reaction is L-phenylalanine + O2 + H2O = 3-phenylpyruvate + H2O2 + NH4(+). It carries out the reaction L-tyrosine + O2 + H2O = 3-(4-hydroxyphenyl)pyruvate + H2O2 + NH4(+). It catalyses the reaction L-arginine + O2 + H2O = 5-guanidino-2-oxopentanoate + H2O2 + NH4(+). Its pathway is amino-acid degradation; L-tryptophan degradation via pyruvate pathway. Functionally, secreted L-amino-acid oxidase that acts as a key immunoregulator. Has preference for L-aromatic amino acids: converts phenylalanine (Phe), tyrosine (Tyr) and tryptophan (Trp) to phenylpyruvic acid (PP), hydroxyphenylpyruvic acid (HPP), and indole-3-pyruvic acid (I3P), respectively. Also has weak L-arginine oxidase activity. Acts as a negative regulator of anti-tumor immunity by mediating Trp degradation via an indole pyruvate pathway that activates the transcription factor AHR. IL4I1-mediated Trp catabolism generates I3P, giving rise to indole metabolites (indole-3-acetic acid (IAA) and indole-3-aldehyde (I3A)) and kynurenic acid, which act as ligands for AHR, a ligand-activated transcription factor that plays important roles in immunity and cancer. AHR activation by indoles following IL4I1-mediated Trp degradation enhances tumor progression by promoting cancer cell motility and suppressing adaptive immunity. Also has an immunoregulatory function in some immune cells, probably by mediating Trp degradation and promoting downstream AHR activation: inhibits T-cell activation and proliferation, promotes the differentiation of naive CD4(+) T-cells into FOXP3(+) regulatory T-cells (Treg) and regulates the development and function of B-cells. Also regulates M2 macrophage polarization by inhibiting T-cell activation. Also has antibacterial properties by inhibiting growth of Gram negative and Gram positive bacteria through the production of NH4(+) and H2O2. In Mus spretus (Western Mediterranean mouse), this protein is L-amino-acid oxidase.